We begin with the raw amino-acid sequence, 641 residues long: Sodium-dependent nutrient amino acid transporter 1 (641 aa).

A disordered region spans residues 1–34 (MELKGVQPSNGSANGNGTTNAASTEKADTEKQTA). The Cytoplasmic portion of the chain corresponds to 1–38 (MELKGVQPSNGSANGNGTTNAASTEKADTEKQTAERTN). Low complexity predominate over residues 9-24 (SNGSANGNGTTNAAST). The segment covering 25 to 34 (EKADTEKQTA) has biased composition (basic and acidic residues). 3 consecutive transmembrane segments (helical) span residues 39 to 59 (WGNGLEFLMSCISVSVGLGNV), 72 to 92 (GAFLIPYIIVLFLIGKPMYYL), and 109 to 129 (SVVPGFVGVGYGQAFGTICII). Asn-183 and Asn-188 each carry an N-linked (GlcNAc...) asparagine glycan. Helical transmembrane passes span 229–249 (PDWKLTLALFVAWVVIFLVIM), 258–278 (AAYFLALFPYVVLFVLLIRAV), 307–327 (AVVQCFFSLAVGSGPIIMFAS), 341–361 (IVTTLDTLTSLLGGITIFAIL), 401–421 (LFSVLFFFMLFVLGIGSIVAL), 441–461 (VALITSACGFLMGLVYVTPGG), 474–494 (TYVVFILAIFELAGIVWVYGL), 516–536 (CWSFFTPVMMIIIFIYSMATI), and 552–572 (IAGWLLFAIGAAQFPLWGLWY).

Belongs to the sodium:neurotransmitter symporter (SNF) (TC 2.A.22) family.

Its subcellular location is the membrane. Its function is as follows. Unusual broad substrate spectrum amino acid:sodium cotransporter that promotes absorption of the D isomers of essential amino acids. Neutral amino acids are the preferred substrates, especially methionine and phenylalanine. This chain is Sodium-dependent nutrient amino acid transporter 1, found in Drosophila yakuba (Fruit fly).